The following is a 45-amino-acid chain: uncharacterized protein (45 aa).

This is an uncharacterized protein from Acidianus two-tailed virus (ATV).